The primary structure comprises 273 residues: Testis-specific serine/threonine-protein kinase 6 (273 aa).

The 256-residue stretch at 12 to 267 (YKLGRTIGEG…AGQVARNCWL (256 aa)) folds into the Protein kinase domain. ATP is bound by residues 18–26 (IGEGSYSKV) and Lys-41. Asp-135 serves as the catalytic Proton acceptor.

It belongs to the protein kinase superfamily. CAMK Ser/Thr protein kinase family. In terms of assembly, microtubule inner protein component of sperm flagellar doublet microtubules. Interacts with HSP90; this interaction stabilizes and activates TSSK6. Interacts with the heat shock proteins HSPCB, HSPA8 and HSPA1A. These interactions appear to be required for TSSK6 kinase activity. Interacts with TSACC; this interaction is direct and recruits TSACC to HSP90, which is essential for kinase activity. Mg(2+) is required as a cofactor. Post-translationally, autophosphorylated. In terms of processing, ubiquitinated; HSP90 activity negatively regulates ubiquitination and degradation. As to expression, highly expressed in testis. Expressed at lower levels in colon, small intestine, ovary, prostate, thymus, spleen and peripheral blood leukocytes.

It is found in the cytoplasm. Its subcellular location is the cytoskeleton. The protein resides in the flagellum axoneme. It localises to the nucleus. The catalysed reaction is L-seryl-[protein] + ATP = O-phospho-L-seryl-[protein] + ADP + H(+). It catalyses the reaction L-threonyl-[protein] + ATP = O-phospho-L-threonyl-[protein] + ADP + H(+). Functionally, serine/threonine-protein kinase component of the sperm flagellar doublet microtubules. May act as a regulator of sperm motility by mediating phosphorylation of sperm doublet microtubule proteins. Plays a role in DNA condensation during postmeiotic chromatin remodeling and histone-to-protamine transition during spermatogenesis. This chain is Testis-specific serine/threonine-protein kinase 6, found in Homo sapiens (Human).